Reading from the N-terminus, the 396-residue chain is Cytochrome b (396 aa).

The next 4 membrane-spanning stretches (helical) occupy residues 37–57 (FGSL…ILAM), 81–102 (WLMR…YAHI), 117–137 (WNVG…GYVL), and 182–202 (FFTF…IHIM). His87 and His101 together coordinate heme b. Positions 186 and 200 each coordinate heme b. Residue His205 participates in a ubiquinone binding. 4 consecutive transmembrane segments (helical) span residues 230-250 (FKDI…SLLP), 292-312 (LGGV…PFTH), 324-344 (LAQV…WLGG), and 351-371 (FILM…LIFP).

It belongs to the cytochrome b family. The cytochrome bc1 complex contains 3 respiratory subunits (MT-CYB, CYC1 and UQCRFS1), 2 core proteins (UQCRC1 and UQCRC2) and probably 6 low-molecular weight proteins. Heme b is required as a cofactor.

Its subcellular location is the mitochondrion inner membrane. In terms of biological role, component of the ubiquinol-cytochrome c reductase complex (complex III or cytochrome b-c1 complex) that is part of the mitochondrial respiratory chain. The b-c1 complex mediates electron transfer from ubiquinol to cytochrome c. Contributes to the generation of a proton gradient across the mitochondrial membrane that is then used for ATP synthesis. The sequence is that of Cytochrome b (mt-cyb) from Lampetra fluviatilis (European river lamprey).